The chain runs to 287 residues: Very long chain fatty acid elongase 4 (287 aa).

Helical transmembrane passes span 33–53 (ILVY…EHIM), 64–84 (PFVV…YSCV), and 115–135 (FWVF…VFLV). The short motif at 145–149 (HWYHH) is the HxxHH motif element. The Nucleophile role is filled by His148. 4 helical membrane passes run 150–170 (LTVA…GLWF), 172–192 (TMNY…ACGM), 199–219 (IAPF…LIVL), and 241–261 (LGLV…GKLY).

This sequence belongs to the ELO family.

The protein localises to the membrane. The enzyme catalyses a very-long-chain acyl-CoA + malonyl-CoA + H(+) = a very-long-chain 3-oxoacyl-CoA + CO2 + CoA. Functionally, involved in the synthesis of fatty acids. Elongates C16:0 and C18:0 fatty acids to C26:0, with C24:0 being the main product. This is Very long chain fatty acid elongase 4 from Trypanosoma cruzi (strain CL Brener).